Consider the following 423-residue polypeptide: Serine--tRNA ligase (423 aa).

229–231 (TAE) contacts L-serine. 260-262 (RKE) serves as a coordination point for ATP. Residue Glu283 coordinates L-serine. ATP is bound at residue 347–350 (EVSS). Ser383 serves as a coordination point for L-serine.

It belongs to the class-II aminoacyl-tRNA synthetase family. Type-1 seryl-tRNA synthetase subfamily. In terms of assembly, homodimer. The tRNA molecule binds across the dimer.

The protein resides in the cytoplasm. The enzyme catalyses tRNA(Ser) + L-serine + ATP = L-seryl-tRNA(Ser) + AMP + diphosphate + H(+). It carries out the reaction tRNA(Sec) + L-serine + ATP = L-seryl-tRNA(Sec) + AMP + diphosphate + H(+). It functions in the pathway aminoacyl-tRNA biosynthesis; selenocysteinyl-tRNA(Sec) biosynthesis; L-seryl-tRNA(Sec) from L-serine and tRNA(Sec): step 1/1. In terms of biological role, catalyzes the attachment of serine to tRNA(Ser). Is also able to aminoacylate tRNA(Sec) with serine, to form the misacylated tRNA L-seryl-tRNA(Sec), which will be further converted into selenocysteinyl-tRNA(Sec). This is Serine--tRNA ligase from Chloroflexus aurantiacus (strain ATCC 29366 / DSM 635 / J-10-fl).